Consider the following 330-residue polypeptide: Protein rlx (330 aa).

The disordered stretch occupies residues Leu-220–Leu-330. Composition is skewed to basic and acidic residues over residues Asn-237–Arg-269 and Gln-279–Leu-330.

Its function is as follows. This protein is probably required for relaxation complex formation and plasmid mobilization by conjugative plasmids. This is Protein rlx (rlx) from Staphylococcus aureus.